The following is a 97-amino-acid chain: Large ribosomal subunit protein uL23 (97 aa).

It belongs to the universal ribosomal protein uL23 family. In terms of assembly, part of the 50S ribosomal subunit. Contacts protein L29, and trigger factor when it is bound to the ribosome.

Functionally, one of the early assembly proteins it binds 23S rRNA. One of the proteins that surrounds the polypeptide exit tunnel on the outside of the ribosome. Forms the main docking site for trigger factor binding to the ribosome. The polypeptide is Large ribosomal subunit protein uL23 (Brucella anthropi (strain ATCC 49188 / DSM 6882 / CCUG 24695 / JCM 21032 / LMG 3331 / NBRC 15819 / NCTC 12168 / Alc 37) (Ochrobactrum anthropi)).